The following is a 225-amino-acid chain: DNA repair and recombination protein RadB (225 aa).

The protein belongs to the eukaryotic RecA-like protein family. RadB subfamily.

In terms of biological role, involved in DNA repair and in homologous recombination. May regulate the cleavage reactions of the branch-structured DNA. Has a very weak ATPase activity that is not stimulated by DNA. Binds DNA but does not promote DNA strands exchange. The chain is DNA repair and recombination protein RadB from Methanococcoides burtonii (strain DSM 6242 / NBRC 107633 / OCM 468 / ACE-M).